The primary structure comprises 199 residues: Chaperone protein TorD (199 aa).

It belongs to the TorD/DmsD family. TorD subfamily.

Its subcellular location is the cytoplasm. Functionally, involved in the biogenesis of TorA. Acts on TorA before the insertion of the molybdenum cofactor and, as a result, probably favors a conformation of the apoenzyme that is competent for acquiring the cofactor. In Shigella dysenteriae serotype 1 (strain Sd197), this protein is Chaperone protein TorD.